A 192-amino-acid polypeptide reads, in one-letter code: Cell division protein SepF (192 aa).

A disordered region spans residues 154-192 (QEEPAPSNVTTTTQQSEETISESVTAPEPAWGTPVASAI). Residues 162–178 (VTTTTQQSEETISESVT) show a composition bias toward low complexity.

This sequence belongs to the SepF family. As to quaternary structure, homodimer. Interacts with FtsZ.

It is found in the cytoplasm. Functionally, cell division protein that is part of the divisome complex and is recruited early to the Z-ring. Probably stimulates Z-ring formation, perhaps through the cross-linking of FtsZ protofilaments. Its function overlaps with FtsA. In Prochlorococcus marinus (strain MIT 9211), this protein is Cell division protein SepF.